A 433-amino-acid chain; its full sequence is Glutamate-1-semialdehyde 2,1-aminomutase (433 aa).

The residue at position 269 (lysine 269) is an N6-(pyridoxal phosphate)lysine.

This sequence belongs to the class-III pyridoxal-phosphate-dependent aminotransferase family. HemL subfamily. In terms of assembly, homodimer. It depends on pyridoxal 5'-phosphate as a cofactor.

The protein resides in the cytoplasm. The enzyme catalyses (S)-4-amino-5-oxopentanoate = 5-aminolevulinate. Its pathway is porphyrin-containing compound metabolism; protoporphyrin-IX biosynthesis; 5-aminolevulinate from L-glutamyl-tRNA(Glu): step 2/2. This chain is Glutamate-1-semialdehyde 2,1-aminomutase, found in Francisella philomiragia subsp. philomiragia (strain ATCC 25017 / CCUG 19701 / FSC 153 / O#319-036).